We begin with the raw amino-acid sequence, 153 residues long: Insulin-like growth factor 1 (153 aa).

Residues 49–77 are b; the sequence is GPETLCGAELVDALQFVCGDRGFYFNKPT. Disulfide bonds link cysteine 54–cysteine 96, cysteine 66–cysteine 109, and cysteine 95–cysteine 100. The interval 78–89 is c; it reads GYGSSSRRAPQT. The segment at 90–110 is a; sequence GIVDECCFRSCDLRRLEMYCA. A d region spans residues 111-118; sequence PLKPAKSA. Residues 119-153 constitute a propeptide, e peptide; that stretch reads RSVRAQRHTDMPKAQKEVHLKNASRGSAGNKNYRM. Positions 120–153 are disordered; sequence SVRAQRHTDMPKAQKEVHLKNASRGSAGNKNYRM. The span at 125-138 shows a compositional bias: basic and acidic residues; sequence RHTDMPKAQKEVHL. The span at 142–153 shows a compositional bias: polar residues; that stretch reads SRGSAGNKNYRM.

Belongs to the insulin family. As to quaternary structure, forms a ternary complex with IGFR1 and ITGAV:ITGB3. Forms a ternary complex with IGFR1 and ITGA6:ITGB4. Forms a ternary complex with IGFBP3 and ALS.

It localises to the secreted. Its function is as follows. The insulin-like growth factors, isolated from plasma, are structurally and functionally related to insulin but have a much higher growth-promoting activity. May be a physiological regulator of [1-14C]-2-deoxy-D-glucose (2DG) transport and glycogen synthesis in osteoblasts. Stimulates glucose transport in bone-derived osteoblastic (PyMS) cells and is effective at much lower concentrations than insulin, not only regarding glycogen and DNA synthesis but also with regard to enhancing glucose uptake. May play a role in synapse maturation. Ca(2+)-dependent exocytosis of IGF1 is required for sensory perception of smell in the olfactory bulb. Acts as a ligand for IGF1R. Binds to the alpha subunit of IGF1R, leading to the activation of the intrinsic tyrosine kinase activity which autophosphorylates tyrosine residues in the beta subunit thus initiating a cascade of down-stream signaling events leading to activation of the PI3K-AKT/PKB and the Ras-MAPK pathways. Binds to integrins ITGAV:ITGB3 and ITGA6:ITGB4. Its binding to integrins and subsequent ternary complex formation with integrins and IGFR1 are essential for IGF1 signaling. Induces the phosphorylation and activation of IGFR1, MAPK3/ERK1, MAPK1/ERK2 and AKT1. As part of the MAPK/ERK signaling pathway, acts as a negative regulator of apoptosis in cardiomyocytes via promotion of STUB1/CHIP-mediated ubiquitination and degradation of ICER-type isoforms of CREM. The chain is Insulin-like growth factor 1 from Canis lupus familiaris (Dog).